Consider the following 119-residue polypeptide: Holo-[acyl-carrier-protein] synthase (119 aa).

2 residues coordinate Mg(2+): aspartate 8 and glutamate 58.

This sequence belongs to the P-Pant transferase superfamily. AcpS family. Mg(2+) serves as cofactor.

It is found in the cytoplasm. The enzyme catalyses apo-[ACP] + CoA = holo-[ACP] + adenosine 3',5'-bisphosphate + H(+). Its function is as follows. Transfers the 4'-phosphopantetheine moiety from coenzyme A to a Ser of acyl-carrier-protein. The polypeptide is Holo-[acyl-carrier-protein] synthase (Bacillus cereus (strain G9842)).